The sequence spans 295 residues: Tetrahydromethanopterin S-methyltransferase subunit E (295 aa).

Transmembrane regions (helical) follow at residues Met4 to Ala24, Gly60 to Met80, Val87 to Val107, Gly140 to Gly160, Phe161 to Ile181, Tyr234 to Thr254, and Ile255 to Ile275.

The protein belongs to the MtrE family. The complex is composed of 8 subunits; MtrA, MtrB, MtrC, MtrD, MtrE, MtrF, MtrG and MtrH.

Its subcellular location is the cell membrane. It carries out the reaction 5-methyl-5,6,7,8-tetrahydromethanopterin + coenzyme M + 2 Na(+)(in) = 5,6,7,8-tetrahydromethanopterin + methyl-coenzyme M + 2 Na(+)(out). Its pathway is one-carbon metabolism; methanogenesis from CO(2); methyl-coenzyme M from 5,10-methylene-5,6,7,8-tetrahydromethanopterin: step 2/2. Part of a complex that catalyzes the formation of methyl-coenzyme M and tetrahydromethanopterin from coenzyme M and methyl-tetrahydromethanopterin. This is an energy-conserving, sodium-ion translocating step. In Methanothermobacter marburgensis (strain ATCC BAA-927 / DSM 2133 / JCM 14651 / NBRC 100331 / OCM 82 / Marburg) (Methanobacterium thermoautotrophicum), this protein is Tetrahydromethanopterin S-methyltransferase subunit E.